The sequence spans 172 residues: Crossover junction endodeoxyribonuclease RuvC (172 aa).

Residues aspartate 7, glutamate 68, and aspartate 140 contribute to the active site. The Mg(2+) site is built by aspartate 7, glutamate 68, and aspartate 140.

It belongs to the RuvC family. As to quaternary structure, homodimer which binds Holliday junction (HJ) DNA. The HJ becomes 2-fold symmetrical on binding to RuvC with unstacked arms; it has a different conformation from HJ DNA in complex with RuvA. In the full resolvosome a probable DNA-RuvA(4)-RuvB(12)-RuvC(2) complex forms which resolves the HJ. Requires Mg(2+) as cofactor.

The protein localises to the cytoplasm. It catalyses the reaction Endonucleolytic cleavage at a junction such as a reciprocal single-stranded crossover between two homologous DNA duplexes (Holliday junction).. Functionally, the RuvA-RuvB-RuvC complex processes Holliday junction (HJ) DNA during genetic recombination and DNA repair. Endonuclease that resolves HJ intermediates. Cleaves cruciform DNA by making single-stranded nicks across the HJ at symmetrical positions within the homologous arms, yielding a 5'-phosphate and a 3'-hydroxyl group; requires a central core of homology in the junction. The consensus cleavage sequence is 5'-(A/T)TT(C/G)-3'. Cleavage occurs on the 3'-side of the TT dinucleotide at the point of strand exchange. HJ branch migration catalyzed by RuvA-RuvB allows RuvC to scan DNA until it finds its consensus sequence, where it cleaves and resolves the cruciform DNA. This Polynucleobacter asymbioticus (strain DSM 18221 / CIP 109841 / QLW-P1DMWA-1) (Polynucleobacter necessarius subsp. asymbioticus) protein is Crossover junction endodeoxyribonuclease RuvC.